The sequence spans 346 residues: MESTLGAGIAMAEALQNQLPWLENVWLWVTFLGDPKSLFLFYFPAAYYASRRVGIAVLWISLITEWLNLVFKWFLFGDRPFWWVHESGYYSQAPAQVHQFPSSCETGPGSPSGHCMITGAALWPIMTAVSSQMATRAHSRWVRVIPSLAYCTFLLAVGLSRVFLLAHFPHQVLAGLITGAVLGWLMTPQVPMERELSFYGLTSLALLLGASLIYWTLFTLGLDLSWSINLASKWCERPEWVHLDSRPFASLSRDSGAALGLGIALHSPCYAQVRRAHLGYGQKLVCLVLAMGLLGPLNWLGYPPQISLFYIFNFLKYTLWPCLVLALVPWLVHMFSAQEAPPIRSS.

Topologically, residues 1 to 24 (MESTLGAGIAMAEALQNQLPWLEN) are lumenal. Residues 25–45 (VWLWVTFLGDPKSLFLFYFPA) form a helical membrane-spanning segment. Residues 46-54 (AYYASRRVG) lie on the Cytoplasmic side of the membrane. The helical transmembrane segment at 55–75 (IAVLWISLITEWLNLVFKWFL) threads the bilayer. The Lumenal portion of the chain corresponds to 76-108 (FGDRPFWWVHESGYYSQAPAQVHQFPSSCETGP). Residue Arg-79 coordinates substrate. The chain crosses the membrane as a helical span at residues 109–129 (GSPSGHCMITGAALWPIMTAV). Residue His-114 is the Proton donor of the active site. Residues 130 to 140 (SSQMATRAHSR) are Cytoplasmic-facing. A helical membrane pass occupies residues 141–162 (WVRVIPSLAYCTFLLAVGLSRV). Arg-161 provides a ligand contact to substrate. The Lumenal portion of the chain corresponds to 163-167 (FLLAH). The Nucleophile role is filled by His-167. The helical transmembrane segment at 168–186 (FPHQVLAGLITGAVLGWLM) threads the bilayer. Residues 187 to 197 (TPQVPMERELS) lie on the Cytoplasmic side of the membrane. Residues 198 to 218 (FYGLTSLALLLGASLIYWTLF) traverse the membrane as a helical segment. Topologically, residues 219 to 254 (TLGLDLSWSINLASKWCERPEWVHLDSRPFASLSRD) are lumenal. A helical membrane pass occupies residues 255 to 273 (SGAALGLGIALHSPCYAQV). Topologically, residues 274 to 283 (RRAHLGYGQK) are cytoplasmic. A helical transmembrane segment spans residues 284–304 (LVCLVLAMGLLGPLNWLGYPP). Residues 305–307 (QIS) are Lumenal-facing. A helical membrane pass occupies residues 308–328 (LFYIFNFLKYTLWPCLVLALV). At 329 to 346 (PWLVHMFSAQEAPPIRSS) the chain is on the cytoplasmic side.

It belongs to the glucose-6-phosphatase family.

Its subcellular location is the endoplasmic reticulum membrane. It carries out the reaction D-glucose 6-phosphate + H2O = D-glucose + phosphate. The protein operates within carbohydrate biosynthesis; gluconeogenesis. With respect to regulation, inhibited by vanadate. In terms of biological role, hydrolyzes glucose-6-phosphate to glucose in the endoplasmic reticulum. May form with the glucose-6-phosphate transporter (SLC37A4/G6PT) a ubiquitously expressed complex responsible for glucose production through glycogenolysis and gluconeogenesis. Probably required for normal neutrophil function. The sequence is that of Glucose-6-phosphatase 3 (G6PC3) from Bos taurus (Bovine).